Consider the following 256-residue polypeptide: tRNA-cytidine(32) 2-sulfurtransferase (256 aa).

The short motif at 35-40 is the PP-loop motif element; the sequence is SGGKDS. The [4Fe-4S] cluster site is built by cysteine 110, cysteine 113, and cysteine 201.

This sequence belongs to the TtcA family. As to quaternary structure, homodimer. Mg(2+) is required as a cofactor. The cofactor is [4Fe-4S] cluster.

Its subcellular location is the cytoplasm. The catalysed reaction is cytidine(32) in tRNA + S-sulfanyl-L-cysteinyl-[cysteine desulfurase] + AH2 + ATP = 2-thiocytidine(32) in tRNA + L-cysteinyl-[cysteine desulfurase] + A + AMP + diphosphate + H(+). The protein operates within tRNA modification. Catalyzes the ATP-dependent 2-thiolation of cytidine in position 32 of tRNA, to form 2-thiocytidine (s(2)C32). The sulfur atoms are provided by the cysteine/cysteine desulfurase (IscS) system. This chain is tRNA-cytidine(32) 2-sulfurtransferase, found in Coxiella burnetii (strain RSA 331 / Henzerling II).